The sequence spans 177 residues: Cytochrome c oxidase assembly protein CtaG (177 aa).

The Cytoplasmic portion of the chain corresponds to 1–8; sequence MTQKAKNT. A helical; Signal-anchor for type II membrane protein membrane pass occupies residues 9-29; that stretch reads IYLLILIILSMLCLVYASVPL. Residues 30–177 are Periplasmic-facing; the sequence is YSIFCKVTGY…TFFKYKENTK (148 aa).

The protein belongs to the COX11/CtaG family.

The protein localises to the cell inner membrane. Functionally, exerts its effect at some terminal stage of cytochrome c oxidase synthesis, probably by being involved in the insertion of the copper B into subunit I. The chain is Cytochrome c oxidase assembly protein CtaG from Ehrlichia ruminantium (strain Welgevonden).